The primary structure comprises 171 residues: uncharacterized protein (171 aa).

The interval 139–171 is disordered; that stretch reads ARKPTKSDDEEEEVGKMGGISSSINSWVQRQKL. Residues 158–171 show a composition bias toward polar residues; sequence ISSSINSWVQRQKL.

This is an uncharacterized protein from Caenorhabditis elegans.